The primary structure comprises 99 residues: Large ribosomal subunit protein uL23 (99 aa).

It belongs to the universal ribosomal protein uL23 family. Part of the 50S ribosomal subunit. Contacts protein L29, and trigger factor when it is bound to the ribosome.

Functionally, one of the early assembly proteins it binds 23S rRNA. One of the proteins that surrounds the polypeptide exit tunnel on the outside of the ribosome. Forms the main docking site for trigger factor binding to the ribosome. This chain is Large ribosomal subunit protein uL23, found in Rhodopseudomonas palustris (strain BisB5).